The chain runs to 167 residues: Small ribosomal subunit protein uS5 (167 aa).

An S5 DRBM domain is found at 12–75 (LQEKLIAVNR…EKARRNMVTV (64 aa)).

The protein belongs to the universal ribosomal protein uS5 family. Part of the 30S ribosomal subunit. Contacts proteins S4 and S8.

With S4 and S12 plays an important role in translational accuracy. Its function is as follows. Located at the back of the 30S subunit body where it stabilizes the conformation of the head with respect to the body. In Shewanella oneidensis (strain ATCC 700550 / JCM 31522 / CIP 106686 / LMG 19005 / NCIMB 14063 / MR-1), this protein is Small ribosomal subunit protein uS5.